Consider the following 543-residue polypeptide: Telomerase Cajal body protein 1 homolog (543 aa).

The segment at 95 to 128 is disordered; the sequence is GRPKNAVESPHAGVPMETSLAAEEEANGDEEEES. Positions 116–127 are enriched in acidic residues; that stretch reads AEEEANGDEEEE. WD repeat units follow at residues 237-283, 291-329, and 378-421; these read PEGG…LRCS, DEVM…RFCD, and GHKG…QPLV.

It belongs to the TCAB1 family.

It localises to the nucleus. The protein resides in the cajal body. In terms of biological role, RNA chaperone that plays a key role in Cajal body formation. Specifically recognizes and binds the Cajal body box (CAB box) present in both small Cajal body RNAs (scaRNAs). Probably acts by mediating localization of scaRNAs to Cajal bodies. The chain is Telomerase Cajal body protein 1 homolog from Drosophila melanogaster (Fruit fly).